The primary structure comprises 162 residues: Beta-lactoglobulin-3 (162 aa).

2 disulfides stabilise this stretch: C66-C160 and C106-C119.

This sequence belongs to the calycin superfamily. Lipocalin family. As to quaternary structure, monomer.

Its subcellular location is the secreted. Its function is as follows. Lactoglobulin is the primary component of whey, it binds retinol and is probably involved in the transport of that molecule. The sequence is that of Beta-lactoglobulin-3 (LGB3) from Felis catus (Cat).